A 209-amino-acid chain; its full sequence is Pyridoxine/pyridoxamine 5'-phosphate oxidase (209 aa).

Substrate is bound by residues 2–5 (RVEY) and Lys66. FMN is bound by residues 61–66 (RTVLCK), 76–77 (FT), Lys83, and Gln105. Residues Tyr123, Arg127, and Ser131 each coordinate substrate. Residues 140-141 (QS) and Trp186 contribute to the FMN site. 192 to 194 (RVH) is a binding site for substrate. Arg196 lines the FMN pocket.

Belongs to the pyridoxamine 5'-phosphate oxidase family. Homodimer. The cofactor is FMN.

The catalysed reaction is pyridoxamine 5'-phosphate + O2 + H2O = pyridoxal 5'-phosphate + H2O2 + NH4(+). It carries out the reaction pyridoxine 5'-phosphate + O2 = pyridoxal 5'-phosphate + H2O2. The protein operates within cofactor metabolism; pyridoxal 5'-phosphate salvage; pyridoxal 5'-phosphate from pyridoxamine 5'-phosphate: step 1/1. It functions in the pathway cofactor metabolism; pyridoxal 5'-phosphate salvage; pyridoxal 5'-phosphate from pyridoxine 5'-phosphate: step 1/1. In terms of biological role, catalyzes the oxidation of either pyridoxine 5'-phosphate (PNP) or pyridoxamine 5'-phosphate (PMP) into pyridoxal 5'-phosphate (PLP). This chain is Pyridoxine/pyridoxamine 5'-phosphate oxidase, found in Mycobacterium sp. (strain JLS).